The chain runs to 219 residues: Protein-L-isoaspartate O-methyltransferase 2 (219 aa).

Serine 66 is a catalytic residue.

Belongs to the methyltransferase superfamily. L-isoaspartyl/D-aspartyl protein methyltransferase family.

The protein localises to the cytoplasm. The catalysed reaction is [protein]-L-isoaspartate + S-adenosyl-L-methionine = [protein]-L-isoaspartate alpha-methyl ester + S-adenosyl-L-homocysteine. In terms of biological role, catalyzes the methyl esterification of L-isoaspartyl residues in peptides and proteins that result from spontaneous decomposition of normal L-aspartyl and L-asparaginyl residues. It plays a role in the repair and/or degradation of damaged proteins. The sequence is that of Protein-L-isoaspartate O-methyltransferase 2 from Marinobacter nauticus (strain ATCC 700491 / DSM 11845 / VT8) (Marinobacter aquaeolei).